The chain runs to 484 residues: Sperm motility kinase Tcr mutant form (484 aa).

The Protein kinase domain occupies 8–256 (YEMLETIGQG…VAEVMVHPWV (249 aa)). Residues 14–22 (IGQGGCAQV) and Lys37 contribute to the ATP site. Asp127 (proton acceptor) is an active-site residue. Disordered regions lie at residues 355-400 (EPTG…TMDQ) and 426-446 (STEG…RGWP). Residues 391-400 (PINTTPTMDQ) show a composition bias toward polar residues.

It belongs to the protein kinase superfamily. Tyr protein kinase family. Smok subfamily. As to expression, testis-specific. Expressed in the testis from 22 days postpartum (22 dpp). Expressed late in spermiogenesis, only in Tcr-containing t-haplotypes.

The catalysed reaction is L-seryl-[protein] + ATP = O-phospho-L-seryl-[protein] + ADP + H(+). The enzyme catalyses L-threonyl-[protein] + ATP = O-phospho-L-threonyl-[protein] + ADP + H(+). Its function is as follows. While the main function of Smoks is to control sperm motility, the role of Smok-Tcr, with reduced kinase activity, is to counterbalance a signaling impairment caused by the distorter/sterility loci, giving t-sperm an advantage in reaching the oocytes. Transmission ratio distortion also called segregation distortion is the name given to the phenomenon above-mentioned. Being associated with the T-complex, it allows males heterozygous for a complete t-haplotype to preferentially transmit the t-haplotype chromosome. The protein is Sperm motility kinase Tcr mutant form (Smoktcr) of Mus musculus (Mouse).